The following is a 357-amino-acid chain: Cinnamyl alcohol dehydrogenase 1 (357 aa).

An Enoyl reductase (ER) domain is found at 20-348 (GILSPYTYTL…KNDVRYRFVV (329 aa)). Cys47 provides a ligand contact to Zn(2+). Ser49 lines the NADP(+) pocket. Zn(2+)-binding residues include His69, Glu70, Cys100, Cys103, Cys106, Cys114, and Cys163. NADP(+)-binding positions include Thr167, 188–193 (GLGGVG), 211–216 (SSSDKK), Thr251, Gly275, and 298–300 (SFI).

Belongs to the zinc-containing alcohol dehydrogenase family. In terms of assembly, homodimer. Zn(2+) serves as cofactor. As to expression, accumulates mainly in the placenta of red fruits, and, to a lower extent, in green fruits placenta, pericarp and seeds.

The protein localises to the cytoplasm. The catalysed reaction is (E)-cinnamyl alcohol + NADP(+) = (E)-cinnamaldehyde + NADPH + H(+). The enzyme catalyses (E)-coniferol + NADP(+) = (E)-coniferaldehyde + NADPH + H(+). It carries out the reaction (E)-sinapyl alcohol + NADP(+) = (E)-sinapaldehyde + NADPH + H(+). It catalyses the reaction (E)-4-coumaroyl alcohol + NADP(+) = (E)-4-coumaraldehyde + NADPH + H(+). The catalysed reaction is (E)-caffeyl alcohol + NADP(+) = (E)-caffeyl aldehyde + NADPH + H(+). The enzyme catalyses vanillin + NADPH + H(+) = 4-hydroxy-3-methoxy-benzenemethanol + NADP(+). Its pathway is aromatic compound metabolism; phenylpropanoid biosynthesis. Inhibited, in a concentration-dependent manner, by N-(O-hydroxyphenyl) sulfinamoyltertiobutyl acetate (OHPAS), a specific cinnamyl alcohol dehydrogenase (CAD) inhibitor, as well as by ethylenediaminetetraacetic acid (EDTA), a metalloenzyme inhibitor. In terms of biological role, involved in the biosynthesis of capsinoids natural products (e.g. capsiate), non-pungent alkaloids synthesized from phenylpropanoid intermediates in the placental tissue of sweet chili pepper fruit acting as repellant on herbivorous mammals. Catalyzes the reduction of vanillin to generate vanillyl alcohol, a precursor of capsiate, a non-pungent component that accumulates mainly in the placenta of mature red fruits, but also in green fruits to lower levels. Involved in lignin biosynthesis. Catalyzes the final step specific for the production of lignin monomers. Mediates the conversion of cinnamaldehyde and coniferaldehyde to cinnamyl alcohol and coniferyl alcohol, respectively. Catalyzes the NADPH-dependent reduction of 5-hydroxyconiferaldehyde, sinapaldehyde, 4-coumaraldehyde and caffeyl aldehyde to their respective alcohols. This chain is Cinnamyl alcohol dehydrogenase 1, found in Capsicum annuum (Capsicum pepper).